We begin with the raw amino-acid sequence, 184 residues long: NADH-quinone oxidoreductase subunit B (184 aa).

[4Fe-4S] cluster-binding residues include Cys63, Cys64, Cys128, and Cys158.

This sequence belongs to the complex I 20 kDa subunit family. In terms of assembly, NDH-1 is composed of 14 different subunits. Subunits NuoB, C, D, E, F, and G constitute the peripheral sector of the complex. [4Fe-4S] cluster is required as a cofactor.

It localises to the cell inner membrane. It carries out the reaction a quinone + NADH + 5 H(+)(in) = a quinol + NAD(+) + 4 H(+)(out). Functionally, NDH-1 shuttles electrons from NADH, via FMN and iron-sulfur (Fe-S) centers, to quinones in the respiratory chain. The immediate electron acceptor for the enzyme in this species is believed to be ubiquinone. Couples the redox reaction to proton translocation (for every two electrons transferred, four hydrogen ions are translocated across the cytoplasmic membrane), and thus conserves the redox energy in a proton gradient. The polypeptide is NADH-quinone oxidoreductase subunit B (Xylella fastidiosa (strain M23)).